We begin with the raw amino-acid sequence, 297 residues long: MLDNKDIATPSRTRALLDKYGFNFKKSLGQNFLIDVNIINNIIDASDIDAQTGVIEIGPGMGSLTEQLARHAKRVLAFEIDQRLIPVLNDTLSPYDNVTVINEDILKANIKEAVENHLQDCEKIMVVANLPYYITTPILLNLMQQDIPIDGYVVMMQKEVGERLNAEIGSKAYGSLSIVVQYYTETSKVLTVPKSVFMPPPNVDSIVVKLMQRTEPLVTVDNEEAFFKLAKAAFAQRRKTINNNYQNYFKDGKQHKEVIIQWLEQAGIDPRRRGETLSIQDFAKLYEEKKKFPQLEN.

Residues Asn31, Leu33, Gly58, Glu79, Asp104, and Asn129 each contribute to the S-adenosyl-L-methionine site.

This sequence belongs to the class I-like SAM-binding methyltransferase superfamily. rRNA adenine N(6)-methyltransferase family. RsmA subfamily.

It is found in the cytoplasm. The enzyme catalyses adenosine(1518)/adenosine(1519) in 16S rRNA + 4 S-adenosyl-L-methionine = N(6)-dimethyladenosine(1518)/N(6)-dimethyladenosine(1519) in 16S rRNA + 4 S-adenosyl-L-homocysteine + 4 H(+). Specifically dimethylates two adjacent adenosines (A1518 and A1519) in the loop of a conserved hairpin near the 3'-end of 16S rRNA in the 30S particle. May play a critical role in biogenesis of 30S subunits. This chain is Ribosomal RNA small subunit methyltransferase A, found in Staphylococcus aureus (strain MRSA252).